Reading from the N-terminus, the 527-residue chain is UDP-glucuronosyltransferase 2A1 (527 aa).

The N-terminal stretch at 1 to 20 is a signal peptide; that stretch reads MLNNLLLFSLQISLIGTTLG. Topologically, residues 21-491 are lumenal; the sequence is GNVLIWPMEG…TWFQYHSLDV (471 aa). 3 N-linked (GlcNAc...) asparagine glycosylation sites follow: Asn49, Leu313, and Asn347. The chain crosses the membrane as a helical span at residues 492 to 512; the sequence is IGFLLVCVTTAIFLVIQCCLF. The Cytoplasmic portion of the chain corresponds to 513-527; sequence SCQKFGKIGKKKKRE.

Belongs to the UDP-glycosyltransferase family. In terms of tissue distribution, olfactory epithelium, brain and fetal lung. Not present in liver.

The protein resides in the membrane. The protein localises to the endoplasmic reticulum membrane. The catalysed reaction is glucuronate acceptor + UDP-alpha-D-glucuronate = acceptor beta-D-glucuronoside + UDP + H(+). It catalyses the reaction 16beta,17beta-estriol + UDP-alpha-D-glucuronate = 16beta,17beta-estriol 16-O-(beta-D-glucuronate) + UDP + H(+). The enzyme catalyses 16alpha,17alpha-estriol + UDP-alpha-D-glucuronate = 16alpha,17alpha-estriol 16-O-(beta-D-glucuronate) + UDP + H(+). It carries out the reaction 17alpha-estradiol + UDP-alpha-D-glucuronate = 17alpha-estradiol 17-O-(beta-D-glucuronate) + UDP + H(+). The catalysed reaction is 17alpha-estradiol + UDP-alpha-D-glucuronate = 17alpha-estradiol 3-O-(beta-D-glucuronate) + UDP + H(+). It catalyses the reaction 17beta-estradiol + UDP-alpha-D-glucuronate = 17beta-estradiol 3-O-(beta-D-glucuronate) + UDP + H(+). The enzyme catalyses 17beta-estradiol + UDP-alpha-D-glucuronate = 17beta-estradiol 17-O-(beta-D-glucuronate) + UDP + H(+). It carries out the reaction testosterone + UDP-alpha-D-glucuronate = testosterone 17-O-(beta-D-glucuronate) + UDP + H(+). The catalysed reaction is epitestosterone + UDP-alpha-D-glucuronate = epitestosterone 17-O-(beta-D-glucuronate) + UDP + H(+). It catalyses the reaction lithocholate + UDP-alpha-D-glucuronate = lithocholoyl-3-O-(beta-D-glucuronate) + UDP + H(+). The enzyme catalyses lithocholate + UDP-alpha-D-glucuronate = lithocholoyl-24-O-(beta-D-glucuronate) + UDP. It carries out the reaction deoxycholate + UDP-alpha-D-glucuronate = deoxycholoyl-24-O-(beta-D-glucuronate) + UDP. The catalysed reaction is hyodeoxycholate + UDP-alpha-D-glucuronate = hyodeoxycholoyl-24-O-(beta-D-glucuronate) + UDP. It catalyses the reaction hyocholate + UDP-alpha-D-glucuronate = hyocholoyl-24-O-(beta-D-glucuronate) + UDP. In terms of biological role, UDP-glucuronosyltransferase (UGT) that catalyzes phase II biotransformation reactions in which lipophilic substrates are conjugated with glucuronic acid to increase the metabolite's water solubility, thereby facilitating excretion into either the urine or bile. Essential for the elimination and detoxification of drugs, xenobiotics and endogenous compounds. Catalyzes the glucuronidation of endogenous steroid hormones such as androgens (testosterone and epitestosterone) and estrogens (estradiol and epiestriol). Contributes to bile acid (BA) detoxification by catalyzing the glucuronidation of BA substrates, which are natural detergents for dietary lipids absorption. Shows a high affinity to aliphatic odorants such as citronellol as well as olfactory tissue specificity, and therefore may be involved in olfaction. Shows a potential role in detoxification of toxic waste compounds in the amniotic fluid before birth, and air-born chemical after birth. The sequence is that of UDP-glucuronosyltransferase 2A1 from Homo sapiens (Human).